Reading from the N-terminus, the 346-residue chain is UDP-3-O-acylglucosamine N-acyltransferase (346 aa).

The active-site Proton acceptor is His-253.

The protein belongs to the transferase hexapeptide repeat family. LpxD subfamily. In terms of assembly, homotrimer.

It carries out the reaction a UDP-3-O-[(3R)-3-hydroxyacyl]-alpha-D-glucosamine + a (3R)-hydroxyacyl-[ACP] = a UDP-2-N,3-O-bis[(3R)-3-hydroxyacyl]-alpha-D-glucosamine + holo-[ACP] + H(+). The protein operates within bacterial outer membrane biogenesis; LPS lipid A biosynthesis. Its function is as follows. Catalyzes the N-acylation of UDP-3-O-acylglucosamine using 3-hydroxyacyl-ACP as the acyl donor. Is involved in the biosynthesis of lipid A, a phosphorylated glycolipid that anchors the lipopolysaccharide to the outer membrane of the cell. In Rickettsia prowazekii (strain Madrid E), this protein is UDP-3-O-acylglucosamine N-acyltransferase.